Here is a 1075-residue protein sequence, read N- to C-terminus: mRNA 3'-end-processing protein rna14 (1075 aa).

Disordered regions lie at residues 20 to 185 (SMGY…NSSL) and 215 to 237 (IARE…GRLP). 2 stretches are compositionally biased toward polar residues: residues 54–72 (ENLQ…QPQP) and 93–112 (PESQ…QPKT). Over residues 120–133 (VEDEDEDDAGDADY) the composition is skewed to acidic residues. HAT repeat units lie at residues 270 to 302 (NRID…MESE), 304 to 335 (NELF…YVRR), 346 to 381 (QARK…FIRS), 395 to 428 (QKMD…FEMG), 465 to 498 (TTLP…WEKG), and 510 to 542 (AYKG…FCFL). Disordered regions lie at residues 621–653 (EETF…SVKN) and 840–941 (PTTF…QGSP). Residues 868–883 (GTPSSRFPEASVTNSP) are compositionally biased toward polar residues. Residues 885–896 (RPLEDFDDDMSR) are compositionally biased toward basic and acidic residues. A compositionally biased stretch (polar residues) spans 925–940 (ALQVPSSGSQYRSQGS).

Its subcellular location is the nucleus. The protein resides in the cytoplasm. In terms of biological role, component of the cleavage factor IA (CFIA) complex, which is involved in the endonucleolytic cleavage during polyadenylation-dependent pre-mRNA 3'-end formation. This is mRNA 3'-end-processing protein rna14 (rna14) from Emericella nidulans (strain FGSC A4 / ATCC 38163 / CBS 112.46 / NRRL 194 / M139) (Aspergillus nidulans).